We begin with the raw amino-acid sequence, 526 residues long: Chaperonin GroEL, chloroplastic (526 aa).

Residues 29 to 32, 86 to 90, G412, 476 to 478, and D492 each bind ATP; these read TLGP, DGTTT, and DAA.

This sequence belongs to the chaperonin (HSP60) family. As to quaternary structure, forms a cylinder of 14 subunits composed of two heptameric rings stacked back-to-back. Interacts with the co-chaperonin GroES.

It is found in the plastid. Its subcellular location is the chloroplast. It carries out the reaction ATP + H2O + a folded polypeptide = ADP + phosphate + an unfolded polypeptide.. In terms of biological role, together with its co-chaperonin GroES, plays an essential role in assisting protein folding. The GroEL-GroES system forms a nano-cage that allows encapsulation of the non-native substrate proteins and provides a physical environment optimized to promote and accelerate protein folding. This Cyanidioschyzon merolae (strain NIES-3377 / 10D) (Unicellular red alga) protein is Chaperonin GroEL, chloroplastic.